Reading from the N-terminus, the 106-residue chain is Cell division topological specificity factor (106 aa).

This sequence belongs to the MinE family.

Prevents the cell division inhibition by proteins MinC and MinD at internal division sites while permitting inhibition at polar sites. This ensures cell division at the proper site by restricting the formation of a division septum at the midpoint of the long axis of the cell. The sequence is that of Cell division topological specificity factor from Prochlorococcus marinus (strain SARG / CCMP1375 / SS120).